Reading from the N-terminus, the 264-residue chain is Thymidylate synthase (264 aa).

DUMP contacts are provided by residues Arg21 and 126–127 (RR). The active-site Nucleophile is the Cys146. DUMP contacts are provided by residues 166 to 169 (RSAD), Asn177, and 207 to 209 (HLY). A (6R)-5,10-methylene-5,6,7,8-tetrahydrofolate-binding site is contributed by Asp169. Ala263 serves as a coordination point for (6R)-5,10-methylene-5,6,7,8-tetrahydrofolate.

Belongs to the thymidylate synthase family. Bacterial-type ThyA subfamily. Homodimer.

It is found in the cytoplasm. The catalysed reaction is dUMP + (6R)-5,10-methylene-5,6,7,8-tetrahydrofolate = 7,8-dihydrofolate + dTMP. It participates in pyrimidine metabolism; dTTP biosynthesis. Catalyzes the reductive methylation of 2'-deoxyuridine-5'-monophosphate (dUMP) to 2'-deoxythymidine-5'-monophosphate (dTMP) while utilizing 5,10-methylenetetrahydrofolate (mTHF) as the methyl donor and reductant in the reaction, yielding dihydrofolate (DHF) as a by-product. This enzymatic reaction provides an intracellular de novo source of dTMP, an essential precursor for DNA biosynthesis. In Rhodopseudomonas palustris (strain HaA2), this protein is Thymidylate synthase.